The primary structure comprises 75 residues: Metallothionein-like protein 1 (75 aa).

The protein belongs to the metallothionein superfamily. Type 15 family.

Metallothioneins have a high content of cysteine residues that bind various heavy metals. The chain is Metallothionein-like protein 1 (MTA) from Pisum sativum (Garden pea).